The chain runs to 415 residues: Multifunctional CCA protein (415 aa).

ATP is bound by residues glycine 8 and arginine 11. Glycine 8 and arginine 11 together coordinate CTP. Mg(2+) contacts are provided by aspartate 21 and aspartate 23. ATP-binding residues include arginine 91, arginine 143, and arginine 146. Residues arginine 91, arginine 143, and arginine 146 each contribute to the CTP site. Residues 232–333 (TGVHVMMVID…VRLLERCDAL (102 aa)) enclose the HD domain.

This sequence belongs to the tRNA nucleotidyltransferase/poly(A) polymerase family. Bacterial CCA-adding enzyme type 1 subfamily. Monomer. Can also form homodimers and oligomers. Requires Mg(2+) as cofactor. Ni(2+) is required as a cofactor.

It catalyses the reaction a tRNA precursor + 2 CTP + ATP = a tRNA with a 3' CCA end + 3 diphosphate. The catalysed reaction is a tRNA with a 3' CCA end + 2 CTP + ATP = a tRNA with a 3' CCACCA end + 3 diphosphate. Catalyzes the addition and repair of the essential 3'-terminal CCA sequence in tRNAs without using a nucleic acid template. Adds these three nucleotides in the order of C, C, and A to the tRNA nucleotide-73, using CTP and ATP as substrates and producing inorganic pyrophosphate. tRNA 3'-terminal CCA addition is required both for tRNA processing and repair. Also involved in tRNA surveillance by mediating tandem CCA addition to generate a CCACCA at the 3' terminus of unstable tRNAs. While stable tRNAs receive only 3'-terminal CCA, unstable tRNAs are marked with CCACCA and rapidly degraded. The protein is Multifunctional CCA protein of Cupriavidus taiwanensis (strain DSM 17343 / BCRC 17206 / CCUG 44338 / CIP 107171 / LMG 19424 / R1) (Ralstonia taiwanensis (strain LMG 19424)).